Here is a 476-residue protein sequence, read N- to C-terminus: Protein transport protein Sec61 subunit alpha isoform 2 (476 aa).

Residues 1-32 are Cytoplasmic-facing; that stretch reads MGIKFLEVIKPFCAVLPEIQKPERKIQFREKV. Residues 33–53 form a helical membrane-spanning segment; the sequence is LWTAITLFIFLVCCQIPLFGI. Over 54-75 the chain is Lumenal; it reads MSSDSADPFYWMRVILASNRGT. Residues 76–96 traverse the membrane as a helical segment; it reads LMELGISPIVTSGLIMQLLAG. At 97–117 the chain is on the cytoplasmic side; it reads AKIIEVGDTPKDRALFNGAQK. A helical membrane pass occupies residues 118–138; the sequence is LFGMIITIGQAIVYVMTGMYG. The Lumenal portion of the chain corresponds to 139–144; sequence DPAEMG. The helical transmembrane segment at 145–165 threads the bilayer; sequence AGICLLIIIQLFVAGLIVLLL. Topologically, residues 166 to 172 are cytoplasmic; the sequence is DELLQKG. Residues 173-193 traverse the membrane as a helical segment; sequence YGLGSGISLFIATNICETIVW. The Lumenal segment spans residues 194–240; that stretch reads KASSPTTINTGRGTEFEGAVIALFHLLATRTDKVRALREAFYRQNLP. The helical transmembrane segment at 241-261 threads the bilayer; that stretch reads NLMNLIATVFVFAVVIYFQGF. Residues 262–288 are Cytoplasmic-facing; sequence RVDLPIKSARYRGQYSSYPIKLFYTSN. The chain crosses the membrane as a helical span at residues 289–309; sequence IPIILQSALVSNLYVISQMLS. The Lumenal segment spans residues 310 to 353; sequence VRFSGNFLVNLLGQWADVSGGGPARSYPVGGLCYYLSPPESMGA. The chain crosses the membrane as a helical span at residues 354-374; the sequence is ILEDPVHVVVYIIFMLGSCAF. At 375-420 the chain is on the cytoplasmic side; sequence FSKTWIEVSGSSAKDVAKQLKEQQMVMRGHRDTSMVHELNRYIPTA. The next 2 helical transmembrane spans lie at 421–441 and 442–462; these read AAFG…LGAI and GSGT…EIFV. At 463–476 the chain is on the cytoplasmic side; it reads KEQAEVGGMGALFF.

Belongs to the SecY/SEC61-alpha family. In terms of assembly, the SEC61 channel-forming translocon complex consists of channel-forming core components SEC61A1, SEC61B and SEC61G and different auxiliary components such as SEC62 and SEC63.

It is found in the endoplasmic reticulum membrane. Component of SEC61 channel-forming translocon complex that mediates transport of signal peptide-containing precursor polypeptides across the endoplasmic reticulum (ER). Forms a ribosome receptor and a gated pore in the ER membrane, both functions required for cotranslational translocation of nascent polypeptides. The chain is Protein transport protein Sec61 subunit alpha isoform 2 (SEC61A2) from Pongo abelii (Sumatran orangutan).